The sequence spans 517 residues: 2,4,6-trichlorophenol monooxygenase (517 aa).

This sequence belongs to the FADH(2)-utilizing monooxygenase family. As to quaternary structure, homotetramer in solution.

It carries out the reaction 2,4,6-trichlorophenol + FADH2 + O2 = 2-chloro-6-hydroxy-1,4-benzoquinone + FAD + 2 chloride + 3 H(+). It catalyses the reaction 2,4,6-trichlorophenol + FADH2 + O2 = 2,6-dichlorobenzoquinone + FAD + chloride + H2O + H(+). The catalysed reaction is 2,6-dichlorobenzoquinone + H2O = 2-chloro-6-hydroxy-1,4-benzoquinone + chloride + 2 H(+). It functions in the pathway aromatic compound metabolism. Its pathway is xenobiotic degradation. Functionally, involved in the degradation of 2,4,6-trichlorophenol (2,4,6-TCP). Catalyzes the conversion of 2,4,6-TCP to 6-chlorohydroxyquinol (6-CHQ). The monooxygenase oxidizes 2,4,6-TCP to 2,6-dichloroquinone (2,6-DCBQ), which remains with the enzyme and is hydrolyzed to 2-chlorohydroxyquinone. 2-chlorohydroxyquinone is chemically reduced by ascorbate and NADH to 6-chlorohydroxyquinol (6-CHQ). This chain is 2,4,6-trichlorophenol monooxygenase, found in Cupriavidus pinatubonensis (strain JMP 134 / LMG 1197) (Cupriavidus necator (strain JMP 134)).